The primary structure comprises 298 residues: 4-hydroxy-tetrahydrodipicolinate synthase (298 aa).

T48 is a pyruvate binding site. The active-site Proton donor/acceptor is Y137. The active-site Schiff-base intermediate with substrate is K166. I207 is a pyruvate binding site.

It belongs to the DapA family. Homotetramer; dimer of dimers.

It is found in the cytoplasm. It catalyses the reaction L-aspartate 4-semialdehyde + pyruvate = (2S,4S)-4-hydroxy-2,3,4,5-tetrahydrodipicolinate + H2O + H(+). The protein operates within amino-acid biosynthesis; L-lysine biosynthesis via DAP pathway; (S)-tetrahydrodipicolinate from L-aspartate: step 3/4. Its function is as follows. Catalyzes the condensation of (S)-aspartate-beta-semialdehyde [(S)-ASA] and pyruvate to 4-hydroxy-tetrahydrodipicolinate (HTPA). This is 4-hydroxy-tetrahydrodipicolinate synthase from Campylobacter jejuni subsp. doylei (strain ATCC BAA-1458 / RM4099 / 269.97).